Here is a 138-residue protein sequence, read N- to C-terminus: Protein X (138 aa).

Residues 20-43 (PLRGQPSGPSVSGTSAGSPSSAAS) are disordered. A compositionally biased stretch (low complexity) spans 25–43 (PSGPSVSGTSAGSPSSAAS). A mitochondrial targeting sequence region spans residues 68-113 (PCCLGFTCADLRTMDSTVNFVPWHAKRQLGMMQKDFWTAYIRDQLL).

This sequence belongs to the orthohepadnavirus protein X family. In terms of assembly, may form homodimer. May interact with host CEBPA, CFLAR, CREB1, DDB1, E4F1, HBXIP, HSPD1/HSP60, NFKBIA, POLR2E and SMAD4. Interacts with host SMC5-SMC6 complex and induces its degradation. Interacts with host TRPC4AP; leading to prevent ubiquitination of TRPC4AP. Interacts with host PLSCR1; this interaction promotes ubiquitination and degradation of HBx and impairs HBx-mediated cell proliferation. A fraction may be phosphorylated in insect cells and HepG2 cells, a human hepatoblastoma cell line. Phosphorylated in vitro by host protein kinase C or mitogen-activated protein kinase. N-acetylated in insect cells.

The protein localises to the host cytoplasm. It is found in the host nucleus. It localises to the host mitochondrion. Its function is as follows. Multifunctional protein that plays a role in silencing host antiviral defenses and promoting viral transcription. Does not seem to be essential for HBV infection. May be directly involved in development of cirrhosis and liver cancer (hepatocellular carcinoma). Most of cytosolic activities involve modulation of cytosolic calcium. The effect on apoptosis is controversial depending on the cell types in which the studies have been conducted. May induce apoptosis by localizing in mitochondria and causing loss of mitochondrial membrane potential. May also modulate apoptosis by binding host CFLAR, a key regulator of the death-inducing signaling complex (DISC). Promotes viral transcription by using the host E3 ubiquitin ligase DDB1 to target the SMC5-SMC6 complex to proteasomal degradation. This host complex would otherwise bind to viral episomal DNA, and prevents its transcription. Moderately stimulates transcription of many different viral and cellular transcription elements. Promoters and enhancers stimulated by HBx contain DNA binding sites for NF-kappa-B, AP-1, AP-2, c-EBP, ATF/CREB, or the calcium-activated factor NF-AT. The sequence is that of Protein X from Ground squirrel hepatitis virus (strain 27) (GSHV).